Here is a 197-residue protein sequence, read N- to C-terminus: FMN-dependent NADH:quinone oxidoreductase (197 aa).

FMN is bound at residue Ser-10.

Belongs to the azoreductase type 1 family. Homodimer. Requires FMN as cofactor.

It carries out the reaction 2 a quinone + NADH + H(+) = 2 a 1,4-benzosemiquinone + NAD(+). The enzyme catalyses N,N-dimethyl-1,4-phenylenediamine + anthranilate + 2 NAD(+) = 2-(4-dimethylaminophenyl)diazenylbenzoate + 2 NADH + 2 H(+). In terms of biological role, quinone reductase that provides resistance to thiol-specific stress caused by electrophilic quinones. Functionally, also exhibits azoreductase activity. Catalyzes the reductive cleavage of the azo bond in aromatic azo compounds to the corresponding amines. The chain is FMN-dependent NADH:quinone oxidoreductase from Mycoplasma pneumoniae (strain ATCC 29342 / M129 / Subtype 1) (Mycoplasmoides pneumoniae).